We begin with the raw amino-acid sequence, 592 residues long: Aspartate--tRNA ligase (592 aa).

Residue Glu-173 coordinates L-aspartate. The segment at 197–200 (QLFK) is aspartate. L-aspartate is bound at residue Arg-219. ATP contacts are provided by residues 219–221 (RDE) and Gln-228. His-448 is a binding site for L-aspartate. Glu-482 is an ATP binding site. Position 489 (Arg-489) interacts with L-aspartate. 534-537 (GLDR) is a binding site for ATP.

This sequence belongs to the class-II aminoacyl-tRNA synthetase family. Type 1 subfamily. As to quaternary structure, homodimer.

It is found in the cytoplasm. The enzyme catalyses tRNA(Asp) + L-aspartate + ATP = L-aspartyl-tRNA(Asp) + AMP + diphosphate. Functionally, catalyzes the attachment of L-aspartate to tRNA(Asp) in a two-step reaction: L-aspartate is first activated by ATP to form Asp-AMP and then transferred to the acceptor end of tRNA(Asp). The protein is Aspartate--tRNA ligase of Shewanella baltica (strain OS195).